The following is a 151-amino-acid chain: MLP-like protein 168 (151 aa).

It belongs to the MLP family.

The protein is MLP-like protein 168 (MLP168) of Arabidopsis thaliana (Mouse-ear cress).